The primary structure comprises 152 residues: MFRGINAITIDTKGRLAIPTRYRSALGAEDKIPLVVTIDTEETCLLLYTAAQWQIIEDNLQKLPSFNAAARRIQRLLIGHATDVEVDANGRVLLPTVLRNYAKLEKDVVMIGQGNKFEVWNKELWESKREQWLAEEASMTDGLPEEMKTFSL.

2 SpoVT-AbrB domains span residues 5 to 52 (INAI…TAAQ) and 81 to 124 (ATDV…NKEL).

Belongs to the MraZ family. As to quaternary structure, forms oligomers.

It localises to the cytoplasm. Its subcellular location is the nucleoid. This Legionella pneumophila (strain Paris) protein is Transcriptional regulator MraZ.